The chain runs to 331 residues: Hyaluronidase B (331 aa).

2 cysteine pairs are disulfide-bonded: cysteine 19–cysteine 308 and cysteine 185–cysteine 197. Asparagine 79 carries N-linked (GlcNAc...) asparagine glycosylation. Glutamate 109 acts as the Proton donor in catalysis.

It belongs to the glycosyl hydrolase 56 family. As to expression, expressed by the venom gland.

The protein resides in the secreted. The catalysed reaction is Random hydrolysis of (1-&gt;4)-linkages between N-acetyl-beta-D-glucosamine and D-glucuronate residues in hyaluronate.. Its function is as follows. Hydrolyzes high molecular weight hyaluronic acid to produce small oligosaccharides. This Vespa velutina (Asian yellow-legged hornet) protein is Hyaluronidase B.